The sequence spans 588 residues: ATP-dependent lipid A-core flippase (588 aa).

A run of 6 helical transmembrane segments spans residues 23 to 43 (FWPV…IDAG), 56 to 76 (FITI…IGIT), 141 to 161 (DALT…TVMM), 162 to 182 (VICW…GIIV), 257 to 277 (LVIA…STVI), and 278 to 298 (TISA…IKPM). The region spanning 28 to 310 (LLGVLANILY…LTTLNATIQR (283 aa)) is the ABC transmembrane type-1 domain. Positions 342–576 (IEFKHVYHAY…DGHYAQLYKV (235 aa)) constitute an ABC transporter domain. 375-382 (GHSGSGKT) is a binding site for ATP.

The protein belongs to the ABC transporter superfamily. Lipid exporter (TC 3.A.1.106) family. In terms of assembly, homodimer.

The protein localises to the cell inner membrane. The catalysed reaction is ATP + H2O + lipid A-core oligosaccharideSide 1 = ADP + phosphate + lipid A-core oligosaccharideSide 2.. Involved in lipopolysaccharide (LPS) biosynthesis. Translocates lipid A-core from the inner to the outer leaflet of the inner membrane. Transmembrane domains (TMD) form a pore in the inner membrane and the ATP-binding domain (NBD) is responsible for energy generation. The chain is ATP-dependent lipid A-core flippase from Legionella pneumophila subsp. pneumophila (strain Philadelphia 1 / ATCC 33152 / DSM 7513).